The chain runs to 220 residues: Adenylate kinase (220 aa).

10-15 is an ATP binding site; the sequence is GAGKGT. Positions 30–59 are NMP; it reads STGDMLRAAVKAGTPLGVEAKGYMDAGKLV. AMP-binding positions include T31, R36, 57-59, 85-88, and Q92; these read KLV and GFPR. The LID stretch occupies residues 122–159; it reads GRRTHPASGRTYHVKFNPPKVEGHDDVTGEPLIQRDDD. Residues R123 and 132-133 contribute to the ATP site; that span reads TY. Residues R156 and R167 each coordinate AMP. An ATP-binding site is contributed by G206.

The protein belongs to the adenylate kinase family. Monomer.

It is found in the cytoplasm. It catalyses the reaction AMP + ATP = 2 ADP. It functions in the pathway purine metabolism; AMP biosynthesis via salvage pathway; AMP from ADP: step 1/1. Catalyzes the reversible transfer of the terminal phosphate group between ATP and AMP. Plays an important role in cellular energy homeostasis and in adenine nucleotide metabolism. The chain is Adenylate kinase from Burkholderia cenocepacia (strain HI2424).